We begin with the raw amino-acid sequence, 224 residues long: Phosphoribosylformylglycinamidine synthase subunit PurQ (224 aa).

Residues 2–224 enclose the Glutamine amidotransferase type-1 domain; it reads TVAVVRFGGS…DGQGILGAFA (223 aa). Cysteine 85 functions as the Nucleophile in the catalytic mechanism. Catalysis depends on residues histidine 202 and glutamate 204.

In terms of assembly, part of the FGAM synthase complex composed of 1 PurL, 1 PurQ and 2 PurS subunits.

The protein resides in the cytoplasm. The enzyme catalyses N(2)-formyl-N(1)-(5-phospho-beta-D-ribosyl)glycinamide + L-glutamine + ATP + H2O = 2-formamido-N(1)-(5-O-phospho-beta-D-ribosyl)acetamidine + L-glutamate + ADP + phosphate + H(+). It catalyses the reaction L-glutamine + H2O = L-glutamate + NH4(+). Its pathway is purine metabolism; IMP biosynthesis via de novo pathway; 5-amino-1-(5-phospho-D-ribosyl)imidazole from N(2)-formyl-N(1)-(5-phospho-D-ribosyl)glycinamide: step 1/2. Functionally, part of the phosphoribosylformylglycinamidine synthase complex involved in the purines biosynthetic pathway. Catalyzes the ATP-dependent conversion of formylglycinamide ribonucleotide (FGAR) and glutamine to yield formylglycinamidine ribonucleotide (FGAM) and glutamate. The FGAM synthase complex is composed of three subunits. PurQ produces an ammonia molecule by converting glutamine to glutamate. PurL transfers the ammonia molecule to FGAR to form FGAM in an ATP-dependent manner. PurS interacts with PurQ and PurL and is thought to assist in the transfer of the ammonia molecule from PurQ to PurL. The chain is Phosphoribosylformylglycinamidine synthase subunit PurQ from Halobacterium salinarum (strain ATCC 700922 / JCM 11081 / NRC-1) (Halobacterium halobium).